The sequence spans 439 residues: uncharacterized protein (439 aa).

The region spanning 1–55 (MLEQVRIQKMVNGGYGLAHLSNGKVVLVEGAYPGEEVLIKTYREKRDFSFGKVVS) is the TRAM domain. [4Fe-4S] cluster contacts are provided by Cys68, Cys74, Cys77, and Cys149. Residues Gln272, Tyr301, Glu322, and Asp367 each coordinate S-adenosyl-L-methionine. Residue Cys394 is the Nucleophile of the active site.

This sequence belongs to the class I-like SAM-binding methyltransferase superfamily. RNA M5U methyltransferase family.

This is an uncharacterized protein from Thermotoga maritima (strain ATCC 43589 / DSM 3109 / JCM 10099 / NBRC 100826 / MSB8).